The following is a 426-amino-acid chain: MNILLSRFRLLLAAALAALSWGAQAQLSIEITGAGATRFPVAIPLFENEGSLPRGITDVVRADLERSGLFSLVDMGLVTLPATAVPDLAGVRARGADAVLAGSLYPQADGRYDVRFRLFDTQKQTELGGLSLRMTPAQNRATAHRIADFVYEKLTGQPGYFATRIAYVVKSGPRYELQIADADGMNAQTALASREPIISPAWAPDGQRLAYVSFEAKKPVVYVHTLATGQRHVVANFKGSNSAPTWAPDGQRLAVVLTKDGQSQLYVLNADGSGLRRMATSPGIDTEPAWSPDGEWIYFSSDRGGSAQIYRIPASGGSAQRVTFEGNYNVTPRLSPDGRSLAFITRNNGRFQVAVMDLATRQTTILTDSSRDESPSFAPNGRMILYATESGGRGVLAAVSSDGRVKQRLSVQAADVREPSWGPLTR.

Positions 1–25 are cleaved as a signal peptide; it reads MNILLSRFRLLLAAALAALSWGAQA.

The protein belongs to the TolB family. In terms of assembly, the Tol-Pal system is composed of five core proteins: the inner membrane proteins TolA, TolQ and TolR, the periplasmic protein TolB and the outer membrane protein Pal. They form a network linking the inner and outer membranes and the peptidoglycan layer.

It is found in the periplasm. Part of the Tol-Pal system, which plays a role in outer membrane invagination during cell division and is important for maintaining outer membrane integrity. This is Tol-Pal system protein TolB from Aromatoleum aromaticum (strain DSM 19018 / LMG 30748 / EbN1) (Azoarcus sp. (strain EbN1)).